The primary structure comprises 883 residues: Alanine--tRNA ligase (883 aa).

Zn(2+)-binding residues include H570, H574, C672, and H676.

Belongs to the class-II aminoacyl-tRNA synthetase family. The cofactor is Zn(2+).

The protein resides in the cytoplasm. The enzyme catalyses tRNA(Ala) + L-alanine + ATP = L-alanyl-tRNA(Ala) + AMP + diphosphate. In terms of biological role, catalyzes the attachment of alanine to tRNA(Ala) in a two-step reaction: alanine is first activated by ATP to form Ala-AMP and then transferred to the acceptor end of tRNA(Ala). Also edits incorrectly charged Ser-tRNA(Ala) and Gly-tRNA(Ala) via its editing domain. The protein is Alanine--tRNA ligase of Heliobacterium modesticaldum (strain ATCC 51547 / Ice1).